Reading from the N-terminus, the 559-residue chain is MVEKILIHRILTLFPNAIARKLLLMLTFILIFWIIYLASKDHTKFSFNLENHIILNQGNIFKKYSHSETPLCPAVSPKETELRIKDIMEKLDQQIPPRPFTHVNTTTSATHSTATILNPQDTYCRGDQLDILLEVRDHLGHRKQYGGDFLRARMYSTALMAGASGKVTDFNNGTYLVSFTLFWEGQVSLSLLLIHPSEGVSALWRARNQGCDRIIFTGLFANRSSNVFTECGLTLNTNAELCQYMDDRDQEAFYCVRPQHMPCEALTHMTTRTRNISYLSKEEWRLFHRSNIGVEMMKNFTPIEVIPCNKSENIKKNCQIGMKTPFPSGYTLKKMWITAFCKQIKFNETKNINDCLERKLIYLMGDSTLHQWIYYLQKAVKTLKYFDHHGAGIFKTHVLLDVERHILIQWKKHGHPFVTKKLFSVKDENYIPREIDQVAGDKNTAIVITLGQHFRPFPINIFIRRAINIQKAIERLFLRSPETKVILKTENTREIEQNAEMFSDFHGYIQNLIIRDIFVDLNVGIIDAWDMTIAYCTNNAHPPDYVIQNQIGMFLNYIC.

A helical membrane pass occupies residues 17–37; the sequence is AIARKLLLMLTFILIFWIIYL.

Belongs to the NXPE family.

The protein localises to the membrane. The sequence is that of NXPE family member 2 (NXPE2) from Homo sapiens (Human).